The primary structure comprises 627 residues: Membrane protein insertase YidC (627 aa).

Residues 8–28 (LFLALILSMGIWMGVNYFFFP) form a helical membrane-spanning segment. Residues 33 to 57 (KKNTETKQTQSDKTSENTKQQITSG) are compositionally biased toward polar residues. The interval 33 to 68 (KKNTETKQTQSDKTSENTKQQITSGKTKESNSADPV) is disordered. Residues 58-68 (KTKESNSADPV) show a composition bias toward basic and acidic residues. Helical transmembrane passes span 417–437 (FTIP…KLVF), 488–508 (VGGC…YTAF), 536–556 (AIPY…LMVG), and 575–595 (MLMY…PSGV).

It belongs to the OXA1/ALB3/YidC family. Type 1 subfamily. Interacts with the Sec translocase complex via SecD. Specifically interacts with transmembrane segments of nascent integral membrane proteins during membrane integration.

The protein resides in the cell inner membrane. Functionally, required for the insertion and/or proper folding and/or complex formation of integral membrane proteins into the membrane. Involved in integration of membrane proteins that insert both dependently and independently of the Sec translocase complex, as well as at least some lipoproteins. Aids folding of multispanning membrane proteins. The protein is Membrane protein insertase YidC of Leptospira interrogans serogroup Icterohaemorrhagiae serovar copenhageni (strain Fiocruz L1-130).